A 143-amino-acid chain; its full sequence is Transcriptional regulator MraZ (143 aa).

SpoVT-AbrB domains lie at 5–47 (EYHH…PMQG) and 76–119 (ATEC…SRSR).

Belongs to the MraZ family. As to quaternary structure, forms oligomers.

It is found in the cytoplasm. Its subcellular location is the nucleoid. This chain is Transcriptional regulator MraZ, found in Moorella thermoacetica (strain ATCC 39073 / JCM 9320).